The chain runs to 443 residues: Phosphoglucosamine mutase (443 aa).

Ser-103 (phosphoserine intermediate) is an active-site residue. Ser-103, Asp-244, Asp-246, and Asp-248 together coordinate Mg(2+). Residue Ser-103 is modified to Phosphoserine.

Belongs to the phosphohexose mutase family. Requires Mg(2+) as cofactor. Activated by phosphorylation.

The enzyme catalyses alpha-D-glucosamine 1-phosphate = D-glucosamine 6-phosphate. Its function is as follows. Catalyzes the conversion of glucosamine-6-phosphate to glucosamine-1-phosphate. The sequence is that of Phosphoglucosamine mutase from Pelagibacter ubique (strain HTCC1062).